An 83-amino-acid chain; its full sequence is Mitochondrial import inner membrane translocase subunit Tim8 (83 aa).

Positions 35-60 (CWDVCFADYRPPSKMDGKTQTCIQNC) match the Twin CX3C motif motif. 2 disulfide bridges follow: Cys-35-Cys-60 and Cys-39-Cys-56.

It belongs to the small Tim family. In terms of assembly, heterohexamer; composed of 3 copies of ddp-1/tim-8 and 3 copies of tin-13/tim-13, named soluble 70 kDa complex. Associates with the TIM22 complex, whose core is composed of tim-22.

Its subcellular location is the mitochondrion inner membrane. Mitochondrial intermembrane chaperone that participates in the import and insertion of some multi-pass transmembrane proteins into the mitochondrial inner membrane. Also required for the transfer of beta-barrel precursors from the TOM complex to the sorting and assembly machinery (SAM complex) of the outer membrane. Acts as a chaperone-like protein that protects the hydrophobic precursors from aggregation and guide them through the mitochondrial intermembrane space. The ddp-1/tim-8-tim-13 complex mediates the import of some proteins while the predominant tim-9/tin-9.1-tim-10/tin-10 70 kDa complex mediates the import of much more proteins. In Caenorhabditis elegans, this protein is Mitochondrial import inner membrane translocase subunit Tim8.